The following is a 386-amino-acid chain: L-olivosyl-oleandolide 3-O-methyltransferase (386 aa).

S-adenosyl-L-methionine is bound by residues Ser166, 195 to 201, Ser210, Asp227, 245 to 246, and Asp268; these read EIGIGGY and RQ. Asp268 provides a ligand contact to Mg(2+). The active-site Proton acceptor is the His271. Glu296 and Asp297 together coordinate Mg(2+). The segment at 364–386 is disordered; it reads RRAINKEGGIPHTVPREPFWNDN.

This sequence belongs to the methyltransferase OleY/MycE family. Homodimer. Mg(2+) serves as cofactor.

The catalysed reaction is L-olivosyl-oleandolide + S-adenosyl-L-methionine = L-oleandrosyl-oleandolide + S-adenosyl-L-homocysteine + H(+). It functions in the pathway antibiotic biosynthesis. 3-O-methyltransferase involved in the synthesis of L-oleandrose, a sugar attached to oleandomycin, a macrolide antibiotic. Acts on monoglycosylated macrolactones and mediates the conversion of L-olivosyl-erythronolide B into its 3-O-methylated derivative, L-oleandrosyl-erythronolide B. Also able to methylate other monoglycosylated derivatives, such as L-rhamnosyl- and L-mycarosyl-erythronolide B. The chain is L-olivosyl-oleandolide 3-O-methyltransferase (oleY) from Streptomyces antibioticus.